The following is a 432-amino-acid chain: Probable imidazolonepropionase (432 aa).

Y159 and H192 together coordinate 4-imidazolone-5-propanoate. Y159 is a binding site for N-formimidoyl-L-glutamate. A Fe(3+)-binding site is contributed by H260. Zn(2+) is bound at residue H260. E263 serves as a coordination point for 4-imidazolone-5-propanoate. D334 is a Fe(3+) binding site. Residue D334 participates in Zn(2+) binding. N336 provides a ligand contact to N-formimidoyl-L-glutamate.

The protein belongs to the metallo-dependent hydrolases superfamily. HutI family. Zn(2+) is required as a cofactor. Requires Fe(3+) as cofactor.

It catalyses the reaction 4-imidazolone-5-propanoate + H2O = N-formimidoyl-L-glutamate. It functions in the pathway amino-acid degradation; L-histidine degradation into L-glutamate; N-formimidoyl-L-glutamate from L-histidine: step 3/3. In Xenopus tropicalis (Western clawed frog), this protein is Probable imidazolonepropionase (amdhd1).